Here is a 441-residue protein sequence, read N- to C-terminus: Methylenetetrahydrofolate--tRNA-(uracil-5-)-methyltransferase TrmFO (441 aa).

FAD is bound at residue 10–15 (GAGLAG).

The protein belongs to the MnmG family. TrmFO subfamily. Requires FAD as cofactor.

The protein resides in the cytoplasm. The catalysed reaction is uridine(54) in tRNA + (6R)-5,10-methylene-5,6,7,8-tetrahydrofolate + NADH + H(+) = 5-methyluridine(54) in tRNA + (6S)-5,6,7,8-tetrahydrofolate + NAD(+). It catalyses the reaction uridine(54) in tRNA + (6R)-5,10-methylene-5,6,7,8-tetrahydrofolate + NADPH + H(+) = 5-methyluridine(54) in tRNA + (6S)-5,6,7,8-tetrahydrofolate + NADP(+). Catalyzes the folate-dependent formation of 5-methyl-uridine at position 54 (M-5-U54) in all tRNAs. The sequence is that of Methylenetetrahydrofolate--tRNA-(uracil-5-)-methyltransferase TrmFO from Desulforamulus reducens (strain ATCC BAA-1160 / DSM 100696 / MI-1) (Desulfotomaculum reducens).